The following is a 647-amino-acid chain: CRE-binding bZIP protein SKO1 (647 aa).

Disordered stretches follow at residues 1 to 119 (MSSE…GSKR), 135 to 204 (STTN…QMPG), 305 to 331 (TPTTNTTDGTVNNSISNSNFSPNTSTK), and 353 to 429 (KENE…EEQE). The span at 51–85 (RNNSTSTITQHSQRSTHSLNSIPEENGNSTVTDNS) shows a compositional bias: polar residues. Phosphoserine is present on S94. T113 is modified (phosphothreonine). Low complexity-rich tracts occupy residues 138–194 (NPSQ…SGNG) and 305–329 (TPTTNTTDGTVNNSISNSNFSPNTS). Composition is skewed to polar residues over residues 357–368 (NLTTQIENNDQF) and 396–405 (RKNSAVTTAP). Position 399 is a phosphoserine (S399). Residues 429–492 (ERKRKEFLER…PSSSSNSQFN (64 aa)) form the bZIP domain. The basic motif stretch occupies residues 430 to 451 (RKRKEFLERNRVAASKFRKRKK). Residues 454–461 (IKKIENDL) are leucine-zipper. Phosphoserine is present on S558.

This sequence belongs to the bZIP family.

The protein localises to the nucleus. Its function is as follows. Binds to the CRE motif 5'-TGACGTCA-3' and acts as a repressor of transcription of the SUC2 gene and most probably other genes. The polypeptide is CRE-binding bZIP protein SKO1 (SKO1) (Saccharomyces cerevisiae (strain ATCC 204508 / S288c) (Baker's yeast)).